We begin with the raw amino-acid sequence, 139 residues long: Fluoroacetyl-CoA thioesterase (139 aa).

Residues 40–50 (FATGFMVGLME) and Gly69 each bind substrate. Catalysis depends on residues Thr42 and Glu50. Residues Gly69 and 76–77 (HT) each bind CoA. Residue His76 is part of the active site. Arg120 contacts substrate.

In terms of assembly, homodimer.

The catalysed reaction is fluoroacetyl-CoA + H2O = fluoroacetate + CoA + H(+). Functionally, hydrolyzes fluoroacetyl-CoA before it can react with citrate synthase, and thus confers fluoroacetate resistance. Cannot use acetyl-CoA as substrate. This Streptantibioticus cattleyicolor (Streptomyces cattleya) protein is Fluoroacetyl-CoA thioesterase (flK).